The chain runs to 133 residues: Small ribosomal subunit protein uS8 (133 aa).

Belongs to the universal ribosomal protein uS8 family. In terms of assembly, part of the 30S ribosomal subunit. Contacts proteins S5 and S12.

Its function is as follows. One of the primary rRNA binding proteins, it binds directly to 16S rRNA central domain where it helps coordinate assembly of the platform of the 30S subunit. This Chlorobaculum parvum (strain DSM 263 / NCIMB 8327) (Chlorobium vibrioforme subsp. thiosulfatophilum) protein is Small ribosomal subunit protein uS8.